Consider the following 97-residue polypeptide: Aspartyl/glutamyl-tRNA(Asn/Gln) amidotransferase subunit C (97 aa).

This sequence belongs to the GatC family. In terms of assembly, heterotrimer of A, B and C subunits.

The enzyme catalyses L-glutamyl-tRNA(Gln) + L-glutamine + ATP + H2O = L-glutaminyl-tRNA(Gln) + L-glutamate + ADP + phosphate + H(+). It carries out the reaction L-aspartyl-tRNA(Asn) + L-glutamine + ATP + H2O = L-asparaginyl-tRNA(Asn) + L-glutamate + ADP + phosphate + 2 H(+). Allows the formation of correctly charged Asn-tRNA(Asn) or Gln-tRNA(Gln) through the transamidation of misacylated Asp-tRNA(Asn) or Glu-tRNA(Gln) in organisms which lack either or both of asparaginyl-tRNA or glutaminyl-tRNA synthetases. The reaction takes place in the presence of glutamine and ATP through an activated phospho-Asp-tRNA(Asn) or phospho-Glu-tRNA(Gln). This is Aspartyl/glutamyl-tRNA(Asn/Gln) amidotransferase subunit C from Prochlorococcus marinus (strain MIT 9303).